A 251-amino-acid polypeptide reads, in one-letter code: Hydroxyacylglutathione hydrolase (251 aa).

Positions 53, 55, 57, 58, 110, 127, and 165 each coordinate Zn(2+).

Belongs to the metallo-beta-lactamase superfamily. Glyoxalase II family. As to quaternary structure, monomer. Requires Zn(2+) as cofactor.

It catalyses the reaction an S-(2-hydroxyacyl)glutathione + H2O = a 2-hydroxy carboxylate + glutathione + H(+). It participates in secondary metabolite metabolism; methylglyoxal degradation; (R)-lactate from methylglyoxal: step 2/2. Thiolesterase that catalyzes the hydrolysis of S-D-lactoyl-glutathione to form glutathione and D-lactic acid. The polypeptide is Hydroxyacylglutathione hydrolase (Serratia proteamaculans (strain 568)).